A 590-amino-acid polypeptide reads, in one-letter code: MLRTRTAGSLRPADAGQTVTLAGWVARRRDHGGVIFIDLRDASGVSQVVFRDGAVLEQAHRLRSEFCVAVTGVVEIRPEGNANADIPTGEVEVNATSLTVLGESAALPFQLDETAGEEARLKYRYLDLRREVPGNAIRLRSKVNAAARGVLAGHDFVEIETPTLTRSTPEGARDFLVPARLQPGSFYALPQSPQLFKQLLMVAGMERYYQIARCYRDEDFRADRQPEFTQLDMEMSFVDADDVMALSEEVLRAVWATIGYDLPLPLPRISYADAMRRFGSDKPDLRFGLELVECTEYFADTPFRVFQAPYVGAVVMPGGASQPRRTLDGWQEFAKQRGHKGLAYVLVGKDGELTGPVAKNLTDAERAGLTAHVGANPGDCVFFAAGTAKSARALLGATRIEVAKRLDLIDPDAWAFTWVVDWPMFESAAEATASGDVAVGSGAWTAMHHAFTAPTPESEATFDTDPGSALSNAYDIVCNGNEIGGGSLRIHRRDVQERVFAMMGISQEEAEDKFGFLLEAFTFGAPPHGGIAFGWDRIVALLAGLDSIREVIAFPKSGGGVDPLTEAPAPITAQQRKESGIDAKPGKDGA.

E170 is an L-aspartate binding site. Residues 194–197 are aspartate; that stretch reads QLFK. R216 provides a ligand contact to L-aspartate. ATP is bound by residues 216-218 and Q225; that span reads RDE. Residue H448 coordinates L-aspartate. E482 contributes to the ATP binding site. Position 489 (R489) interacts with L-aspartate. ATP is bound at residue 534-537; sequence GWDR. The segment at 559–590 is disordered; the sequence is GGVDPLTEAPAPITAQQRKESGIDAKPGKDGA. Residues 575–590 show a composition bias toward basic and acidic residues; sequence QRKESGIDAKPGKDGA.

This sequence belongs to the class-II aminoacyl-tRNA synthetase family. Type 1 subfamily. In terms of assembly, homodimer.

The protein resides in the cytoplasm. It carries out the reaction tRNA(Asx) + L-aspartate + ATP = L-aspartyl-tRNA(Asx) + AMP + diphosphate. Its function is as follows. Aspartyl-tRNA synthetase with relaxed tRNA specificity since it is able to aspartylate not only its cognate tRNA(Asp) but also tRNA(Asn). Reaction proceeds in two steps: L-aspartate is first activated by ATP to form Asp-AMP and then transferred to the acceptor end of tRNA(Asp/Asn). The protein is Aspartate--tRNA(Asp/Asn) ligase of Mycolicibacterium gilvum (strain PYR-GCK) (Mycobacterium gilvum (strain PYR-GCK)).